Here is a 405-residue protein sequence, read N- to C-terminus: 3-hydroxy-3-methylglutaryl-coenzyme A reductase (405 aa).

Active-site charge relay system residues include Glu-101 and Asp-305. Residue His-400 is the Proton donor of the active site.

Belongs to the HMG-CoA reductase family. In terms of assembly, homodimer.

It localises to the cytoplasm. It catalyses the reaction (R)-mevalonate + 2 NADP(+) + CoA = (3S)-3-hydroxy-3-methylglutaryl-CoA + 2 NADPH + 2 H(+). It functions in the pathway metabolic intermediate biosynthesis; (R)-mevalonate biosynthesis; (R)-mevalonate from acetyl-CoA: step 3/3. With respect to regulation, is competitively inhibited by lovastatin (formerly called mevinolin). Lovastatin also blocks the growth of H.salinarum, and this effect is reversed by addition of mevalonate, indicating the critical role that the mevalonate pathway plays in isoprenoid biosynthesis by these archaea. Catalyzes the NADPH-dependent reductive deacylation of (S)-3-hydroxy-3-methylglutaryl-CoA (HMG-CoA) to (R)-mevalonate. Cannot use NADH instead of NADPH. Functions in the mevalonate (MVA) pathway leading to isopentenyl diphosphate (IPP), a key precursor for the biosynthesis of isoprenoid compounds such as archaeal membrane lipids. The chain is 3-hydroxy-3-methylglutaryl-coenzyme A reductase (hmgA) from Halobacterium salinarum (strain ATCC 29341 / DSM 671 / R1).